A 652-amino-acid polypeptide reads, in one-letter code: Threonine--tRNA ligase (652 aa).

A TGS domain is found at 1-61 (MIKLKLPDGS…DRDAEVEIVT (61 aa)). The tract at residues 243–548 (DHRKIGREMD…LIENYEGRFP (306 aa)) is catalytic. Residues C348, H399, and H525 each contribute to the Zn(2+) site.

Belongs to the class-II aminoacyl-tRNA synthetase family. In terms of assembly, homodimer. It depends on Zn(2+) as a cofactor.

The protein localises to the cytoplasm. The catalysed reaction is tRNA(Thr) + L-threonine + ATP = L-threonyl-tRNA(Thr) + AMP + diphosphate + H(+). Its function is as follows. Catalyzes the attachment of threonine to tRNA(Thr) in a two-step reaction: L-threonine is first activated by ATP to form Thr-AMP and then transferred to the acceptor end of tRNA(Thr). Also edits incorrectly charged L-seryl-tRNA(Thr). The sequence is that of Threonine--tRNA ligase from Parvibaculum lavamentivorans (strain DS-1 / DSM 13023 / NCIMB 13966).